Reading from the N-terminus, the 888-residue chain is Villin-like protein quail (888 aa).

A Gelsolin-like repeat occupies 307–366; that stretch reads GVYLLDNYGQSIWLWVGGQAPQADALSAMGNGRAFVKKKKYPDNTLVVRVLEGHEPVEFK. Residues 823-888 form the HP domain; the sequence is FDGHKKYPLT…MELKKQFKLF (66 aa).

It belongs to the villin/gelsolin family. In terms of tissue distribution, germline specific in adult flies.

Required for the formation of cytoplasmic actin filament bundles in nurse cells, possibly by regulating both the polymerization and organization of actin filaments. Mutations in quail result in female sterility due to the disruption of cytoplasmic transport from the nurse cells into the oocyte late in oogenesis. The chain is Villin-like protein quail (qua) from Drosophila melanogaster (Fruit fly).